We begin with the raw amino-acid sequence, 395 residues long: Elongation factor Tu (395 aa).

The tr-type G domain maps to 10 to 204 (KPHVNVGTIG…AVDEYIPEPT (195 aa)). The segment at 19–26 (GHVDHGKT) is G1. Position 19 to 26 (19 to 26 (GHVDHGKT)) interacts with GTP. Residue threonine 26 participates in Mg(2+) binding. The interval 60–64 (GITIA) is G2. Residues 81-84 (DCPG) form a G3 region. GTP-binding positions include 81–85 (DCPGH) and 136–139 (NKVD). Positions 136–139 (NKVD) are G4. The segment at 174–176 (SAL) is G5.

Belongs to the TRAFAC class translation factor GTPase superfamily. Classic translation factor GTPase family. EF-Tu/EF-1A subfamily. In terms of assembly, monomer.

It is found in the cytoplasm. It catalyses the reaction GTP + H2O = GDP + phosphate + H(+). GTP hydrolase that promotes the GTP-dependent binding of aminoacyl-tRNA to the A-site of ribosomes during protein biosynthesis. This Exiguobacterium sibiricum (strain DSM 17290 / CCUG 55495 / CIP 109462 / JCM 13490 / 255-15) protein is Elongation factor Tu.